We begin with the raw amino-acid sequence, 334 residues long: MGEPIRVLVTGAAGQIAYSLLYSIAKGDVFGKEQPLVLVLLDITPMMTVLEGVVMELQDCALPLLREVIPTDKEEVAFKDLDIAILVGSMPRREGMERKDLLKANVKIFKSQGAALDKYAKKTVKVVVVGNPANTNCLIASKSAPSIPKENFSCLTRLDHNRAKSQIALKLGVTSNDVKNVIIWGNHSSTQYPDVNHAKVNVKGKEVGVYEAIKDDSWLKGDFILTVQQRGAAVIKARKLSSAMSAAKAICDHVRDIWFGTPAGEFVSMGVISDGNSYGVPEDLLYSFPVVIKDKTWKFVEGLPINDFSREKMDLTAKELTEEKETAVEFLSSA.

NAD(+) is bound at residue 11 to 17 (GAAGQIA). Residues Arg-92 and Arg-98 each coordinate substrate. NAD(+) is bound by residues Asn-105, Gln-112, and 129 to 131 (VGN). 2 residues coordinate substrate: Asn-131 and Arg-162. His-187 serves as the catalytic Proton acceptor.

This sequence belongs to the LDH/MDH superfamily. MDH type 2 family. Homodimer.

Its subcellular location is the cytoplasm. It localises to the cytosol. It catalyses the reaction (S)-malate + NAD(+) = oxaloacetate + NADH + H(+). The enzyme catalyses (S)-2-hydroxyglutarate + NAD(+) = 2-oxoglutarate + NADH + H(+). Its function is as follows. Catalyzes the reduction of aromatic alpha-keto acids in the presence of NADH. Plays essential roles in the malate-aspartate shuttle and the tricarboxylic acid cycle, important in mitochondrial NADH supply for oxidative phosphorylation. Catalyzes the reduction of 2-oxoglutarate to 2-hydroxyglutarate, leading to elevated reactive oxygen species (ROS). This chain is Malate dehydrogenase, cytoplasmic (MDH1), found in Gallus gallus (Chicken).